The following is a 550-amino-acid chain: MTKFVFVTGGVVSSLGKGIAAASLAAILESRGLKVTLLKLDPYINVDPGTMSPFQHGEVFVTEDGAETDLDLGHYERFVSAKMRKSNNFTTGQIYESVIRKERRGEYLGKTVQVIPHITNEIQAFIEKGAAASHDGKADVALVEIGGTVGDIESLPFLEAARQMSLRMGRNHCAFVHLTLVPFIASAGELKTKPTQHSVQKLREIGISPTALLCRADRPIPDDERAKISLFANIPQDAVISVWDADSIYKIPQMLNEQGLDRLICEELRLDPKPADLSMWQKLVNAQENPEHEITIGMVGKYVDLTESYKSLIEALRHAGMHTATRVNIEYIDSEELESGHLEVLAPLDAILVPGGFGKRGTEGKIRAIQYARENKIPYLGICLGMQLAVIEFARHLAGMADANSTEFNLETEHPVVALITEWVDREGKVEQRSADSDLGGTMRLGAQRVPVKEGTKARAIYGAEVNERHRHRYEVNNHYVPTLEKAGMVISARTPTENLPEMMELPESMHPWFVGVQFHPEFTSTPRDGHPLFKAYVEAALASQQRKGA.

The amidoligase domain stretch occupies residues 1–270; the sequence is MTKFVFVTGG…DRLICEELRL (270 aa). CTP is bound at residue serine 13. Serine 13 is a binding site for UTP. Residues 14–19 and aspartate 71 contribute to the ATP site; that span reads SLGKGI. Mg(2+) contacts are provided by aspartate 71 and glutamate 144. CTP contacts are provided by residues 151-153, 191-196, and lysine 227; these read DIE and KTKPTQ. Residues 191–196 and lysine 227 contribute to the UTP site; that span reads KTKPTQ. In terms of domain architecture, Glutamine amidotransferase type-1 spans 295 to 547; it reads TIGMVGKYVD…VEAALASQQR (253 aa). Residue glycine 356 coordinates L-glutamine. Cysteine 383 acts as the Nucleophile; for glutamine hydrolysis in catalysis. L-glutamine contacts are provided by residues 384-387, glutamate 407, and arginine 473; that span reads LGMQ. Active-site residues include histidine 520 and glutamate 522.

This sequence belongs to the CTP synthase family. Homotetramer.

It catalyses the reaction UTP + L-glutamine + ATP + H2O = CTP + L-glutamate + ADP + phosphate + 2 H(+). The catalysed reaction is L-glutamine + H2O = L-glutamate + NH4(+). It carries out the reaction UTP + NH4(+) + ATP = CTP + ADP + phosphate + 2 H(+). It functions in the pathway pyrimidine metabolism; CTP biosynthesis via de novo pathway; CTP from UDP: step 2/2. Its activity is regulated as follows. Allosterically activated by GTP, when glutamine is the substrate; GTP has no effect on the reaction when ammonia is the substrate. The allosteric effector GTP functions by stabilizing the protein conformation that binds the tetrahedral intermediate(s) formed during glutamine hydrolysis. Inhibited by the product CTP, via allosteric rather than competitive inhibition. Catalyzes the ATP-dependent amination of UTP to CTP with either L-glutamine or ammonia as the source of nitrogen. Regulates intracellular CTP levels through interactions with the four ribonucleotide triphosphates. The chain is CTP synthase from Cupriavidus taiwanensis (strain DSM 17343 / BCRC 17206 / CCUG 44338 / CIP 107171 / LMG 19424 / R1) (Ralstonia taiwanensis (strain LMG 19424)).